We begin with the raw amino-acid sequence, 358 residues long: Aminomethyltransferase (358 aa).

This sequence belongs to the GcvT family. The glycine cleavage system is composed of four proteins: P, T, L and H.

It catalyses the reaction N(6)-[(R)-S(8)-aminomethyldihydrolipoyl]-L-lysyl-[protein] + (6S)-5,6,7,8-tetrahydrofolate = N(6)-[(R)-dihydrolipoyl]-L-lysyl-[protein] + (6R)-5,10-methylene-5,6,7,8-tetrahydrofolate + NH4(+). In terms of biological role, the glycine cleavage system catalyzes the degradation of glycine. The sequence is that of Aminomethyltransferase from Francisella tularensis subsp. tularensis (strain FSC 198).